The following is a 404-amino-acid chain: Druantia protein DruA (404 aa).

Its subcellular location is the cytoplasm. In terms of biological role, component of antiviral defense system Druantia type I, composed of DruA, DruB, DruC, DruD and DruE. Expression of Druantia in E.coli (strain MG1655) confers resistance to phage lambda, SECphi18, SECphi27 and T4. The chain is Druantia protein DruA from Escherichia coli (strain UMEA 4076-1).